The chain runs to 151 residues: Transcription antitermination protein NusB (151 aa).

It belongs to the NusB family.

Functionally, involved in transcription antitermination. Required for transcription of ribosomal RNA (rRNA) genes. Binds specifically to the boxA antiterminator sequence of the ribosomal RNA (rrn) operons. In Thermus thermophilus (strain ATCC BAA-163 / DSM 7039 / HB27), this protein is Transcription antitermination protein NusB.